Here is a 359-residue protein sequence, read N- to C-terminus: Phosphatidylglycerol--prolipoprotein diacylglyceryl transferase (359 aa).

4 helical membrane-spanning segments follow: residues V24 to G44, V58 to V78, V98 to I118, and G124 to I144. R146 provides a ligand contact to a 1,2-diacyl-sn-glycero-3-phospho-(1'-sn-glycerol). 3 helical membrane passes run F193–L213, I222–E243, and V258–T278. The tract at residues P284–D359 is disordered. Residues I306–G323 are compositionally biased toward basic and acidic residues. Residues A336 to T349 are compositionally biased toward low complexity. Positions I350–D359 are enriched in basic and acidic residues.

This sequence belongs to the Lgt family.

The protein resides in the cell membrane. It carries out the reaction L-cysteinyl-[prolipoprotein] + a 1,2-diacyl-sn-glycero-3-phospho-(1'-sn-glycerol) = an S-1,2-diacyl-sn-glyceryl-L-cysteinyl-[prolipoprotein] + sn-glycerol 1-phosphate + H(+). The protein operates within protein modification; lipoprotein biosynthesis (diacylglyceryl transfer). In terms of biological role, catalyzes the transfer of the diacylglyceryl group from phosphatidylglycerol to the sulfhydryl group of the N-terminal cysteine of a prolipoprotein, the first step in the formation of mature lipoproteins. The chain is Phosphatidylglycerol--prolipoprotein diacylglyceryl transferase from Rhodococcus jostii (strain RHA1).